We begin with the raw amino-acid sequence, 466 residues long: Soluble pyridine nucleotide transhydrogenase (466 aa).

36–45 (ERYHNVGGGC) contacts FAD.

This sequence belongs to the class-I pyridine nucleotide-disulfide oxidoreductase family. Requires FAD as cofactor.

It is found in the cytoplasm. It catalyses the reaction NAD(+) + NADPH = NADH + NADP(+). Its function is as follows. Conversion of NADPH, generated by peripheral catabolic pathways, to NADH, which can enter the respiratory chain for energy generation. The sequence is that of Soluble pyridine nucleotide transhydrogenase from Salmonella paratyphi C (strain RKS4594).